Here is a 149-residue protein sequence, read N- to C-terminus: MADQLTDEQIAEFKEAFSLFDKDGDGCITTKELGTVMRSLGQNPTEAELQDMINEVDADGNGTIDFPELLNLMARKMKDTDSEEELKEAFRVFDKDQNGFISAAELRHVMTNLGEKLTDEEVDEMIREADVDGDGQINYEEFVKVMMAK.

An N-acetylalanine modification is found at alanine 2. 4 consecutive EF-hand domains span residues 8 to 43 (EQIA…LGQN), 44 to 79 (PTEA…KMKD), 81 to 116 (DSEE…LGEK), and 117 to 149 (LTDE…MMAK). Residues aspartate 21, aspartate 23, aspartate 25, cysteine 27, glutamate 32, aspartate 57, aspartate 59, asparagine 61, threonine 63, glutamate 68, aspartate 94, aspartate 96, asparagine 98, and glutamate 105 each contribute to the Ca(2+) site. An N6,N6,N6-trimethyllysine modification is found at lysine 116. Residues aspartate 130, aspartate 132, aspartate 134, glutamine 136, and glutamate 141 each coordinate Ca(2+).

It belongs to the calmodulin family.

Functionally, calmodulin mediates the control of a large number of enzymes, ion channels and other proteins by Ca(2+). Among the enzymes to be stimulated by the calmodulin-Ca(2+) complex are a number of protein kinases and phosphatases. This is Calmodulin (CALM1) from Zea mays (Maize).